The sequence spans 517 residues: Ribonuclease Y (517 aa).

The helical transmembrane segment at 1-21 (MIESLIALIAAIVGLGIGYLV) threads the bilayer. Positions 207–273 (LINVINIKND…TKVIELLVED (67 aa)) constitute a KH domain. An HD domain is found at 333 to 426 (ALAHSLEVAH…VCAADTLSAA (94 aa)).

It belongs to the RNase Y family.

It is found in the cell membrane. In terms of biological role, endoribonuclease that initiates mRNA decay. This Campylobacter jejuni subsp. jejuni serotype O:2 (strain ATCC 700819 / NCTC 11168) protein is Ribonuclease Y.